We begin with the raw amino-acid sequence, 262 residues long: Demethyldecarbamoylnovobiocin O-methyltransferase (262 aa).

64-65 (TM) provides a ligand contact to S-adenosyl-L-methionine. Glu-72 acts as the Proton acceptor in catalysis. S-adenosyl-L-methionine is bound by residues 92–96 (ETGVW), 122–126 (DSFQG), Phe-178, 196–197 (DG), and Ser-202. Asp-196 lines the Mg(2+) pocket. Residues Asp-223 and Asp-224 each contribute to the Mg(2+) site.

Belongs to the methyltransferase TylF/MycF family. Homodimer. The cofactor is Mg(2+).

The catalysed reaction is desmethyldescarbamoylnovobiocin + S-adenosyl-L-methionine = descarbamoylnovobiocin + S-adenosyl-L-homocysteine + H(+). The protein operates within antibiotic biosynthesis; novobiocin biosynthesis. S-adenosyl-L-methionine-dependent O-methyltransferase that methylates at 4-OH of the noviose moiety, the penultimate step in the novobiocin biosynthesis pathway. Novobiocin is an aminocoumarin family antibiotic that targets bacterial DNA gyrases. This chain is Demethyldecarbamoylnovobiocin O-methyltransferase (novP), found in Streptomyces niveus (Streptomyces spheroides).